A 212-amino-acid polypeptide reads, in one-letter code: MIDPPMDRIKVSGLYAITPDIENIDRLCEMAYHVLAGGVSWLQYRNKKANSRLRLMQALEIHLLCKQFQVPLIINDHMDLVMEIDAEGLHVGGEDTSVAAARHYLGRNKIIGVSCYNQLSHAIEAEKAGADYVAFGAFYPSMTKVDAYQAPIHLLDAAKKTLNIPIVAIGGINLDNAEALIARGCDAVAVSQALFSAQDIQSAARHFSKLFC.

4-amino-2-methyl-5-(diphosphooxymethyl)pyrimidine-binding positions include 43-47 and N75; that span reads QYRNK. 2 residues coordinate Mg(2+): D76 and D95. S114 contacts 4-amino-2-methyl-5-(diphosphooxymethyl)pyrimidine. 141–143 provides a ligand contact to 2-[(2R,5Z)-2-carboxy-4-methylthiazol-5(2H)-ylidene]ethyl phosphate; it reads SMT. Residue K144 coordinates 4-amino-2-methyl-5-(diphosphooxymethyl)pyrimidine. G171 lines the 2-[(2R,5Z)-2-carboxy-4-methylthiazol-5(2H)-ylidene]ethyl phosphate pocket.

Belongs to the thiamine-phosphate synthase family. Requires Mg(2+) as cofactor.

It carries out the reaction 2-[(2R,5Z)-2-carboxy-4-methylthiazol-5(2H)-ylidene]ethyl phosphate + 4-amino-2-methyl-5-(diphosphooxymethyl)pyrimidine + 2 H(+) = thiamine phosphate + CO2 + diphosphate. The catalysed reaction is 2-(2-carboxy-4-methylthiazol-5-yl)ethyl phosphate + 4-amino-2-methyl-5-(diphosphooxymethyl)pyrimidine + 2 H(+) = thiamine phosphate + CO2 + diphosphate. It catalyses the reaction 4-methyl-5-(2-phosphooxyethyl)-thiazole + 4-amino-2-methyl-5-(diphosphooxymethyl)pyrimidine + H(+) = thiamine phosphate + diphosphate. The protein operates within cofactor biosynthesis; thiamine diphosphate biosynthesis; thiamine phosphate from 4-amino-2-methyl-5-diphosphomethylpyrimidine and 4-methyl-5-(2-phosphoethyl)-thiazole: step 1/1. In terms of biological role, condenses 4-methyl-5-(beta-hydroxyethyl)thiazole monophosphate (THZ-P) and 2-methyl-4-amino-5-hydroxymethyl pyrimidine pyrophosphate (HMP-PP) to form thiamine monophosphate (TMP). This is Thiamine-phosphate synthase from Nitrosomonas eutropha (strain DSM 101675 / C91 / Nm57).